Consider the following 329-residue polypeptide: Porphobilinogen deaminase (329 aa).

Cysteine 253 carries the post-translational modification S-(dipyrrolylmethanemethyl)cysteine.

This sequence belongs to the HMBS family. Monomer. Dipyrromethane serves as cofactor.

The enzyme catalyses 4 porphobilinogen + H2O = hydroxymethylbilane + 4 NH4(+). Tetrapolymerization of the monopyrrole PBG into the hydroxymethylbilane pre-uroporphyrinogen in several discrete steps. This is Porphobilinogen deaminase from Leifsonia xyli subsp. xyli (strain CTCB07).